We begin with the raw amino-acid sequence, 305 residues long: Protoheme IX farnesyltransferase 2 (305 aa).

8 consecutive transmembrane segments (helical) span residues 31-51 (VVML…ETWI), 53-73 (WKIL…AAVI), 103-123 (ALVF…LWVN), 125-145 (LTAL…TMYL), 152-172 (NIVI…TAVT), 179-199 (ALLL…ALAI), 231-251 (VLLA…AIYL), and 277-297 (AMKT…VLLV).

The protein belongs to the UbiA prenyltransferase family. Protoheme IX farnesyltransferase subfamily.

Its subcellular location is the cell inner membrane. It carries out the reaction heme b + (2E,6E)-farnesyl diphosphate + H2O = Fe(II)-heme o + diphosphate. It participates in porphyrin-containing compound metabolism; heme O biosynthesis; heme O from protoheme: step 1/1. In terms of biological role, converts heme B (protoheme IX) to heme O by substitution of the vinyl group on carbon 2 of heme B porphyrin ring with a hydroxyethyl farnesyl side group. The chain is Protoheme IX farnesyltransferase 2 from Pseudoalteromonas atlantica (strain T6c / ATCC BAA-1087).